A 407-amino-acid chain; its full sequence is Na(+)-translocating NADH-quinone reductase subunit F (407 aa).

Residues 3–23 (ITLGIAMFTVIVLALAVLILF) form a helical membrane-spanning segment. The region spanning 32–126 (GDITIEINDD…SMKIELPEEV (95 aa)) is the 2Fe-2S ferredoxin-type domain. [2Fe-2S] cluster contacts are provided by cysteine 69, cysteine 75, cysteine 78, and cysteine 110. The region spanning 129 to 269 (VKKWECTVIS…SGPFGEFFAK (141 aa)) is the FAD-binding FR-type domain.

It belongs to the NqrF family. In terms of assembly, composed of six subunits; NqrA, NqrB, NqrC, NqrD, NqrE and NqrF. It depends on [2Fe-2S] cluster as a cofactor. The cofactor is FAD.

It is found in the cell inner membrane. The enzyme catalyses a ubiquinone + n Na(+)(in) + NADH + H(+) = a ubiquinol + n Na(+)(out) + NAD(+). NQR complex catalyzes the reduction of ubiquinone-1 to ubiquinol by two successive reactions, coupled with the transport of Na(+) ions from the cytoplasm to the periplasm. The first step is catalyzed by NqrF, which accepts electrons from NADH and reduces ubiquinone-1 to ubisemiquinone by a one-electron transfer pathway. This Histophilus somni (strain 129Pt) (Haemophilus somnus) protein is Na(+)-translocating NADH-quinone reductase subunit F.